A 356-amino-acid polypeptide reads, in one-letter code: MNKLIEREKTVYYKEKPDPSSLGFGQYFTDYMFVMDYEEGIGWHHPRIAPYAPLTLDPSSSVFHYGQAVFEGLKAYRTDDGRVLLFRPDQNIKRLNRSCERMSMPPLDEELVLEALTQLVELEKDWVPKEKGTSLYIRPFVIATEPSLGVKASRSYTFMIVLSPVGSYYGDDQLKPVRIYVEDEYVRAVNGGVGFAKTAGNYAASLQAQRKANELGYDQVLWLDAIEKKYVEEVGSMNIFFVINGEAVTPALSGSILSGVTRASAIELIRSWGIPVREERISIDEVYAASARGELTEVFGTGTAAVVTPVGELNIHGKTVIVGDGQIGDLSKKLYETITDIQLGKVKGPFNWTVEV.

An N6-(pyridoxal phosphate)lysine modification is found at lysine 197.

Belongs to the class-IV pyridoxal-phosphate-dependent aminotransferase family. Requires pyridoxal 5'-phosphate as cofactor.

It catalyses the reaction L-leucine + 2-oxoglutarate = 4-methyl-2-oxopentanoate + L-glutamate. It carries out the reaction L-isoleucine + 2-oxoglutarate = (S)-3-methyl-2-oxopentanoate + L-glutamate. The enzyme catalyses L-valine + 2-oxoglutarate = 3-methyl-2-oxobutanoate + L-glutamate. It participates in amino-acid biosynthesis; L-isoleucine biosynthesis; L-isoleucine from 2-oxobutanoate: step 4/4. It functions in the pathway amino-acid biosynthesis; L-leucine biosynthesis; L-leucine from 3-methyl-2-oxobutanoate: step 4/4. Its pathway is amino-acid biosynthesis; L-valine biosynthesis; L-valine from pyruvate: step 4/4. Inhibited by canaline. Transaminates branched-chain amino acids and ketoglutarate. Involved in the final step of the methionine regeneration pathway, where ketomethiobutyrate (KMTB) is converted to methionine via a transamination. The amino donor preference is isoleucine, leucine, valine, phenylalanine, and tyrosine. This chain is Branched-chain-amino-acid transaminase 1 (ilvE), found in Bacillus subtilis (strain 168).